Reading from the N-terminus, the 532-residue chain is Flavin-containing monooxygenase 3 (532 aa).

FAD contacts are provided by residues 9–13 (GAGVS), E32, 40–41 (LW), and 61–62 (NS). NADP(+) contacts are provided by residues 60 to 61 (SN) and 195 to 198 (SGCD). S401 carries the phosphoserine modification. The helical transmembrane segment at 510–530 (FFFHWLKLFAIPILLIAVFLV) threads the bilayer.

This sequence belongs to the FMO family. FAD is required as a cofactor.

It localises to the microsome membrane. The protein localises to the endoplasmic reticulum membrane. The enzyme catalyses trimethylamine + NADPH + O2 = trimethylamine N-oxide + NADP(+) + H2O. The catalysed reaction is N,N-dimethylaniline + NADPH + O2 + H(+) = N,N-dimethylaniline N-oxide + NADP(+) + H2O. It catalyses the reaction hypotaurine + NADPH + O2 + H(+) = taurine + NADP(+) + H2O. It carries out the reaction (S)-nicotine + NADPH + O2 = trans-(S)-nicotine N(1')-oxide + NADP(+) + H2O. The enzyme catalyses albendazole + NADPH + O2 + H(+) = albendazole S-oxide + NADP(+) + H2O. In terms of biological role, essential hepatic enzyme that catalyzes the oxygenation of a wide variety of nitrogen- and sulfur-containing compounds including drugs as well as dietary compounds. Plays an important role in the metabolism of trimethylamine (TMA), via the production of trimethylamine N-oxide (TMAO) metabolite. TMA is generated by the action of gut microbiota using dietary precursors such as choline, choline containing compounds, betaine or L-carnitine. By regulating TMAO concentration, FMO3 directly impacts both platelet responsiveness and rate of thrombus formation. The chain is Flavin-containing monooxygenase 3 (FMO3) from Pan troglodytes (Chimpanzee).